A 393-amino-acid chain; its full sequence is Geranylgeranyl pyrophosphate synthase 2 (393 aa).

Residues K109, R112, and H141 each contribute to the isopentenyl diphosphate site. Residues D148 and D152 each coordinate Mg(2+). R157 is a dimethylallyl diphosphate binding site. An isopentenyl diphosphate-binding site is contributed by R158. 3 residues coordinate dimethylallyl diphosphate: K235, T236, and Q275. D278 contacts Mg(2+). Dimethylallyl diphosphate-binding residues include N282, K292, and K302.

Belongs to the FPP/GGPP synthase family. The cofactor is Mg(2+).

It carries out the reaction isopentenyl diphosphate + dimethylallyl diphosphate = (2E)-geranyl diphosphate + diphosphate. The catalysed reaction is isopentenyl diphosphate + (2E)-geranyl diphosphate = (2E,6E)-farnesyl diphosphate + diphosphate. The enzyme catalyses isopentenyl diphosphate + (2E,6E)-farnesyl diphosphate = (2E,6E,10E)-geranylgeranyl diphosphate + diphosphate. It functions in the pathway plant hormone biosynthesis; gibberellin biosynthesis. Its function is as follows. Geranylgeranyl pyrophosphate synthase; part of the gene cluster that mediates the biosynthesis of gibberellins (GAs), diterpenoids that may provide a selective advantage during infection of the preferred host plant, rice. Gibberellins (GAs) are diterpenoids and are synthesized via the mevalonate pathway. Biosynthesis of the major metabolite GA3 (gibberellic acid) from geranylgeranyl diphosphate (GGPP) requires 13 steps. The GGPP produced by the geranylgeranyl diphosphate synthase GGS2 is converted to ent-kaurene via ent-copalyldiphosphate in a two-step cyclization reaction performed by the bifunctional ent-copalyl diphosphate synthase/ent-kaurene synthase enzyme (CPS/KS). Ent-Kaurene is metabolized to GAs by a series of oxidation reactions catalyzed by cytochrome P450 monooxygenases. Cytochrome P450 monooxygenase P450-4 is an ent-kaurene oxidase that catalyzes the three oxidation steps between ent-kaurene and ent-kaurenoic acid. The highly multifunctional cytochrome P450 monooxygenase P450-1 then catalyzes four steps involving oxidation at two carbon atoms, in the main pathway from ent-kaurenoic acid to GA14 via GA12-aldehyde as well as producing kaurenolides and fujenoic acids as by-products. The cytochrome P450 monooxygenase P450-2 then converts GA14 to GA4 by removal of C-20. GA4 is further converted to GA7 by the GA4 desaturase DES via 1,2-desaturation before cytochrome P450 monooxygenase P450-3, a 13-hydroxylase, hydroxylates GA7 to GA3, the final product of the GA-biosynthetic pathway. This Gibberella fujikuroi (strain CBS 195.34 / IMI 58289 / NRRL A-6831) (Bakanae and foot rot disease fungus) protein is Geranylgeranyl pyrophosphate synthase 2.